Reading from the N-terminus, the 36-residue chain is Potassium channel toxin alpha-KTx 16.1 (36 aa).

Intrachain disulfides connect C7/C28, C13/C33, and C17/C35.

The protein belongs to the short scorpion toxin superfamily. Potassium channel inhibitor family. Alpha-KTx 16 subfamily. As to expression, expressed by the venom gland.

It is found in the secreted. Functionally, blocks calcium-activated potassium channels. The protein is Potassium channel toxin alpha-KTx 16.1 of Hottentotta tamulus (Eastern Indian scorpion).